A 1019-amino-acid polypeptide reads, in one-letter code: Type VI secretion system spike protein VgrG2b (1019 aa).

Positions 268–291 (AGRPFTESRLRGHRRDARVASVSG) are disordered. Histidine 935 lines the Zn(2+) pocket. Residue glutamate 936 is part of the active site. Histidine 939 and glutamate 983 together coordinate Zn(2+).

The protein belongs to the VgrG protein family. Interacts with Tla3; this interaction promotes Tle3 loading onto VgrG2b. Interacts with host gamma-tubulin ring complex components GCP1 and GCP4. Zn(2+) serves as cofactor.

The protein resides in the secreted. In terms of biological role, part of the H2 type VI secretion system (H2-T6SS) specialized secretion system, which delivers several virulence factors in both prokaryotic and eukaryotic cells during infection. Forms the spike at the tip of the elongating tube probably formed by haemolysin co-regulated protein 2b/Hcp2b. Allows the delivery of the Tle3 antibacterial toxin to target cells where it exerts its toxicity. Additionally, acts directly as an effector and promotes internalization by interacting with the host gamma-tubulin ring complex. Elicits toxicity also in the bacterial periplasm and disrupts bacterial cell morphology. Toxicity is counteracted by a cognate immunity protein. The chain is Type VI secretion system spike protein VgrG2b (vgrG2b) from Pseudomonas aeruginosa (strain ATCC 15692 / DSM 22644 / CIP 104116 / JCM 14847 / LMG 12228 / 1C / PRS 101 / PAO1).